Reading from the N-terminus, the 535-residue chain is CTP synthase (535 aa).

The tract at residues 1–268 (MKTKYIFVTG…DSLVCKKLEL (268 aa)) is amidoligase domain. Ser14 contributes to the CTP binding site. Residue Ser14 coordinates UTP. 15-20 (SLGKGI) lines the ATP pocket. Tyr55 is a binding site for L-glutamine. An ATP-binding site is contributed by Asp72. Mg(2+) contacts are provided by Asp72 and Glu142. CTP is bound by residues 149-151 (DIE), 189-194 (KTKPTQ), and Lys225. Residues 189 to 194 (KTKPTQ) and Lys225 each bind UTP. One can recognise a Glutamine amidotransferase type-1 domain in the interval 293–535 (TIGLVGKYVE…IKVACTVKEK (243 aa)). Gly355 contacts L-glutamine. The Nucleophile; for glutamine hydrolysis role is filled by Cys382. Residues 383-386 (LGMQ), Glu406, and Arg463 contribute to the L-glutamine site. Catalysis depends on residues His508 and Glu510.

This sequence belongs to the CTP synthase family. Homotetramer.

It carries out the reaction UTP + L-glutamine + ATP + H2O = CTP + L-glutamate + ADP + phosphate + 2 H(+). It catalyses the reaction L-glutamine + H2O = L-glutamate + NH4(+). The catalysed reaction is UTP + NH4(+) + ATP = CTP + ADP + phosphate + 2 H(+). Its pathway is pyrimidine metabolism; CTP biosynthesis via de novo pathway; CTP from UDP: step 2/2. Allosterically activated by GTP, when glutamine is the substrate; GTP has no effect on the reaction when ammonia is the substrate. The allosteric effector GTP functions by stabilizing the protein conformation that binds the tetrahedral intermediate(s) formed during glutamine hydrolysis. Inhibited by the product CTP, via allosteric rather than competitive inhibition. In terms of biological role, catalyzes the ATP-dependent amination of UTP to CTP with either L-glutamine or ammonia as the source of nitrogen. Regulates intracellular CTP levels through interactions with the four ribonucleotide triphosphates. The chain is CTP synthase from Clostridium acetobutylicum (strain ATCC 824 / DSM 792 / JCM 1419 / IAM 19013 / LMG 5710 / NBRC 13948 / NRRL B-527 / VKM B-1787 / 2291 / W).